The following is a 512-amino-acid chain: D-alanine--D-alanyl carrier protein ligase (512 aa).

Residue 152–153 (TS) participates in ATP binding. Asp199 lines the D-alanine pocket. An ATP-binding site is contributed by 294–299 (NAYGPT). Val303 is a binding site for D-alanine. ATP is bound by residues Asp385, 397–400 (YGGR), and Lys499. Lys499 is a D-alanine binding site.

It belongs to the ATP-dependent AMP-binding enzyme family. DltA subfamily.

The protein localises to the cytoplasm. It carries out the reaction holo-[D-alanyl-carrier protein] + D-alanine + ATP = D-alanyl-[D-alanyl-carrier protein] + AMP + diphosphate. The protein operates within cell wall biogenesis; lipoteichoic acid biosynthesis. Catalyzes the first step in the D-alanylation of lipoteichoic acid (LTA), the activation of D-alanine and its transfer onto the D-alanyl carrier protein (Dcp) DltC. In an ATP-dependent two-step reaction, forms a high energy D-alanyl-AMP intermediate, followed by transfer of the D-alanyl residue as a thiol ester to the phosphopantheinyl prosthetic group of the Dcp. D-alanylation of LTA plays an important role in modulating the properties of the cell wall in Gram-positive bacteria, influencing the net charge of the cell wall. In Streptococcus pyogenes serotype M4 (strain MGAS10750), this protein is D-alanine--D-alanyl carrier protein ligase.